Here is a 94-residue protein sequence, read N- to C-terminus: C-C motif chemokine 17 (94 aa).

The first 23 residues, Met1–Ala23, serve as a signal peptide directing secretion. 2 disulfides stabilise this stretch: Cys33-Cys57 and Cys34-Cys73.

It belongs to the intercrine beta (chemokine CC) family.

Its subcellular location is the secreted. Functionally, chemokine, which displays chemotactic activity for T lymphocytes, preferentially Th2 cells, but not monocytes or granulocytes. Therefore plays an important role in a wide range of inflammatory and immunological processes. Acts by binding to CCR4 at T-cell surface. Mediates GM-CSF/CSF2-driven pain and inflammation. In the brain, required to maintain the typical, highly branched morphology of hippocampal microglia under homeostatic conditions. May be important for the appropriate adaptation of microglial morphology and synaptic plasticity to acute lipopolysaccharide (LPS)-induced neuroinflammation. Plays a role in wound healing, mainly by inducing fibroblast migration into the wound. The chain is C-C motif chemokine 17 (CCL17) from Macaca mulatta (Rhesus macaque).